An 82-amino-acid polypeptide reads, in one-letter code: Sulfur carrier protein TusA (82 aa).

Cysteine 19 acts as the Cysteine persulfide intermediate in catalysis.

This sequence belongs to the sulfur carrier protein TusA family.

It is found in the cytoplasm. Functionally, sulfur carrier protein which probably makes part of a sulfur-relay system. This chain is Sulfur carrier protein TusA, found in Tolumonas auensis (strain DSM 9187 / NBRC 110442 / TA 4).